The following is a 144-amino-acid chain: Large ribosomal subunit protein uL16 (144 aa).

The protein belongs to the universal ribosomal protein uL16 family. Part of the 50S ribosomal subunit.

In terms of biological role, binds 23S rRNA and is also seen to make contacts with the A and possibly P site tRNAs. In Novosphingobium aromaticivorans (strain ATCC 700278 / DSM 12444 / CCUG 56034 / CIP 105152 / NBRC 16084 / F199), this protein is Large ribosomal subunit protein uL16.